Consider the following 298-residue polypeptide: Arginase (298 aa).

4 residues coordinate Mn(2+): H98, D121, H123, and D125. Substrate is bound by residues 123-127 (HGDLN), 134-136 (SGN), and D177. Mn(2+) is bound by residues D225 and D227. Substrate contacts are provided by T239 and E270.

It belongs to the arginase family. It depends on Mn(2+) as a cofactor.

It catalyses the reaction L-arginine + H2O = urea + L-ornithine. Its pathway is nitrogen metabolism; urea cycle; L-ornithine and urea from L-arginine: step 1/1. The sequence is that of Arginase (rocF) from Brevibacillus brevis (Bacillus brevis).